A 111-amino-acid chain; its full sequence is Iron-sulfur cluster insertion protein ErpA (111 aa).

Iron-sulfur cluster-binding residues include C39, C103, and C105.

It belongs to the HesB/IscA family. As to quaternary structure, homodimer. The cofactor is iron-sulfur cluster.

Its function is as follows. Required for insertion of 4Fe-4S clusters for at least IspG. This chain is Iron-sulfur cluster insertion protein ErpA, found in Buchnera aphidicola subsp. Cinara cedri (strain Cc).